The primary structure comprises 144 residues: Large ribosomal subunit protein uL16 (144 aa).

This sequence belongs to the universal ribosomal protein uL16 family. Part of the 50S ribosomal subunit.

Functionally, binds 23S rRNA and is also seen to make contacts with the A and possibly P site tRNAs. The sequence is that of Large ribosomal subunit protein uL16 from Thermoanaerobacter pseudethanolicus (strain ATCC 33223 / 39E) (Clostridium thermohydrosulfuricum).